The following is a 577-amino-acid chain: Arginine--tRNA ligase (577 aa).

The 'HIGH' region motif lies at Pro-122–His-132.

The protein belongs to the class-I aminoacyl-tRNA synthetase family. As to quaternary structure, monomer.

It is found in the cytoplasm. The catalysed reaction is tRNA(Arg) + L-arginine + ATP = L-arginyl-tRNA(Arg) + AMP + diphosphate. This is Arginine--tRNA ligase from Aliivibrio salmonicida (strain LFI1238) (Vibrio salmonicida (strain LFI1238)).